Reading from the N-terminus, the 84-residue chain is Small ribosomal subunit protein bS16c (84 aa).

It belongs to the bacterial ribosomal protein bS16 family.

The protein localises to the plastid. It is found in the chloroplast. The chain is Small ribosomal subunit protein bS16c from Mesostigma viride (Green alga).